The chain runs to 219 residues: Redox-sensing transcriptional repressor Rex (219 aa).

The H-T-H motif DNA-binding region spans 17–56; that stretch reads VYLRVLDNLVKRDIEVVSSKSLSKETGFTAEQIRKDLAFF. An NAD(+)-binding site is contributed by 91–96; that stretch reads GAGHLG.

It belongs to the transcriptional regulatory Rex family. In terms of assembly, homodimer.

It localises to the cytoplasm. Its function is as follows. Modulates transcription in response to changes in cellular NADH/NAD(+) redox state. This is Redox-sensing transcriptional repressor Rex from Natranaerobius thermophilus (strain ATCC BAA-1301 / DSM 18059 / JW/NM-WN-LF).